The chain runs to 436 residues: Magnesium transporter MRS2-B (436 aa).

Low complexity-rich tracts occupy residues 1–14 (MSAAAASSAAGDSA) and 29–54 (VASVSSPSLPSAPPGALAGGRRFPGG). The tract at residues 1–60 (MSAAAASSAAGDSAKQPLLHHQRGNPPHVASVSSPSLPSAPPGALAGGRRFPGGLDVPNL) is disordered. The stretch at 176 to 242 (LALEAACSFL…RDEIEQLMDD (67 aa)) forms a coiled coil. 2 helical membrane-spanning segments follow: residues 372-392 (LLLTTATFVVAIFGVVAGIFG) and 408-428 (WVLIITGVIGAFIFCGFLWFF). The Required for magnesium transport activity motif lies at 392–394 (GMN).

This sequence belongs to the CorA metal ion transporter (MIT) (TC 1.A.35.5) family.

It is found in the membrane. Magnesium transporter that may mediate the influx of magnesium. This is Magnesium transporter MRS2-B (MRS2-B) from Oryza sativa subsp. indica (Rice).